The following is a 35-amino-acid chain: Alpha-amanitin proprotein 2 (35 aa).

A propeptide spanning residues Met1 to Pro10 is cleaved from the precursor. Ile11 carries the (3R,4R)-4,5-dihydroxyisoleucine; in form alpha-amanitin modification. (3R,4S)-4-hydroxyisoleucine; in form gamma-amanitin is present on Ile11. The segment at residues Ile11–Pro18 is a cross-link (cyclopeptide (Ile-Pro)). A cross-link (2'-cysteinyl-6'-hydroxytryptophan sulfoxide (Trp-Cys)) is located at residues Trp12 to Cys16. Pro18 bears the 4-hydroxyproline mark. A propeptide spanning residues Trp19–Cys35 is cleaved from the precursor.

It belongs to the MSDIN fungal toxin family. Post-translationally, processed by the macrocyclase-peptidase enzyme POPB to yield a toxic bicyclic octapeptide. POPB first removes 10 residues from the N-terminus. Conformational trapping of the remaining peptide forces the enzyme to release this intermediate rather than proceed to macrocyclization. The enzyme rebinds the remaining peptide in a different conformation and catalyzes macrocyclization of the N-terminal 8 residues.

Its function is as follows. Major toxin belonging to the bicyclic octapeptides amatoxins that acts by binding non-competitively to RNA polymerase II and greatly slowing the elongation of transcripts from target promoters. In Galerina marginata (strain CBS 339.88), this protein is Alpha-amanitin proprotein 2.